We begin with the raw amino-acid sequence, 570 residues long: E3 ubiquitin-protein ligase ZFP91 (570 aa).

Basic and acidic residues predominate over residues 1–12 (MPGETEEPRPPE). Residues 1–306 (MPGETEEPRP…PRLPKRRKKP (306 aa)) form a disordered region. Composition is skewed to low complexity over residues 31–43 (QRPP…APAG) and 59–68 (AAAAAAAAAV). Residues 69–82 (SRRRKAEYPRRRRS) are compositionally biased toward basic residues. Residues Ser-83 and Ser-103 each carry the phosphoserine modification. Over residues 94–104 (QQPQAAKSPSP) the composition is skewed to polar residues. Residues 119-128 (VTTDKDPKEE) are compositionally biased toward basic and acidic residues. Acidic residues predominate over residues 207–223 (SEEEEEEEEEMLISEEE). 2 stretches are compositionally biased toward basic and acidic residues: residues 224–245 (IPFK…ETPK) and 252–269 (KVKE…VEVE). Acidic residues predominate over residues 270–282 (VKEEENEIREDEE). 5 consecutive C2H2-type zinc fingers follow at residues 311–336 (VRCE…KYQH), 342–366 (YVCP…AKHH), 372–394 (YICE…RMIH), 400–422 (LQCE…MKKH), and 430–453 (FSCN…AKSH). Residues 338-368 (LKKKYVCPHPSCGRLFRLQKQLLRHAKHHTD) are interaction with MAP3K14/NIK.

Belongs to the krueppel C2H2-type zinc-finger protein family. Interacts with MAP3K14/NIK. Expressed ubiquitously, particularly at high level in testis. Isoform 2 is testis specific.

The protein resides in the nucleus. It carries out the reaction S-ubiquitinyl-[E2 ubiquitin-conjugating enzyme]-L-cysteine + [acceptor protein]-L-lysine = [E2 ubiquitin-conjugating enzyme]-L-cysteine + N(6)-ubiquitinyl-[acceptor protein]-L-lysine.. It participates in protein modification; protein ubiquitination. Atypical E3 ubiquitin-protein ligase that mediates 'Lys-63'-linked ubiquitination of MAP3K14/NIK, leading to stabilize and activate MAP3K14/NIK. It thereby acts as an activator of the non-canonical NF-kappa-B2/NFKB2 pathway. May also play an important role in cell proliferation and/or anti-apoptosis. The sequence is that of E3 ubiquitin-protein ligase ZFP91 (ZFP91) from Homo sapiens (Human).